The sequence spans 740 residues: DNA ligase (740 aa).

A disordered region spans residues 1-20; sequence MGPGLTLSGMTEQSSLFPAP. NAD(+)-binding positions include 56-60, 105-106, and Glu-142; these read DAEYD and SI. Lys-144 functions as the N6-AMP-lysine intermediate in the catalytic mechanism. 4 residues coordinate NAD(+): Arg-165, Glu-201, Lys-322, and Lys-346. Zn(2+)-binding residues include Cys-471, Cys-474, Cys-489, and Cys-495. Residues 654–740 enclose the BRCT domain; sequence AATLPLAGMT…RGAPPNAGGG (87 aa).

This sequence belongs to the NAD-dependent DNA ligase family. LigA subfamily. Requires Mg(2+) as cofactor. Mn(2+) serves as cofactor.

The catalysed reaction is NAD(+) + (deoxyribonucleotide)n-3'-hydroxyl + 5'-phospho-(deoxyribonucleotide)m = (deoxyribonucleotide)n+m + AMP + beta-nicotinamide D-nucleotide.. In terms of biological role, DNA ligase that catalyzes the formation of phosphodiester linkages between 5'-phosphoryl and 3'-hydroxyl groups in double-stranded DNA using NAD as a coenzyme and as the energy source for the reaction. It is essential for DNA replication and repair of damaged DNA. This Acidovorax ebreus (strain TPSY) (Diaphorobacter sp. (strain TPSY)) protein is DNA ligase.